A 351-amino-acid polypeptide reads, in one-letter code: Nicotinate-nucleotide--dimethylbenzimidazole phosphoribosyltransferase (351 aa).

The active-site Proton acceptor is E317.

The protein belongs to the CobT family.

It catalyses the reaction 5,6-dimethylbenzimidazole + nicotinate beta-D-ribonucleotide = alpha-ribazole 5'-phosphate + nicotinate + H(+). It participates in nucleoside biosynthesis; alpha-ribazole biosynthesis; alpha-ribazole from 5,6-dimethylbenzimidazole: step 1/2. Functionally, catalyzes the synthesis of alpha-ribazole-5'-phosphate from nicotinate mononucleotide (NAMN) and 5,6-dimethylbenzimidazole (DMB). This is Nicotinate-nucleotide--dimethylbenzimidazole phosphoribosyltransferase from Pseudomonas putida (strain ATCC 700007 / DSM 6899 / JCM 31910 / BCRC 17059 / LMG 24140 / F1).